Consider the following 563-residue polypeptide: Eukaryotic translation initiation factor 3 subunit D-1 (563 aa).

The interval 98–136 is disordered; sequence VQKPPHQRGRFRNMRGRGGRGRNPRGGLNNHHHHGMTTL. Residues 100 to 120 show a composition bias toward basic residues; sequence KPPHQRGRFRNMRGRGGRGRN. The interval 291-305 is RNA gate; it reads EFDLLTVNESSVEPP.

It belongs to the eIF-3 subunit D family. Component of the eukaryotic translation initiation factor 3 (eIF-3) complex. The eIF-3 complex interacts with pix.

The protein resides in the cytoplasm. MRNA cap-binding component of the eukaryotic translation initiation factor 3 (eIF-3) complex, which is involved in protein synthesis of a specialized repertoire of mRNAs and, together with other initiation factors, stimulates binding of mRNA and methionyl-tRNAi to the 40S ribosome. The eIF-3 complex specifically targets and initiates translation of a subset of mRNAs involved in cell proliferation. In the eIF-3 complex, eif3d specifically recognizes and binds the 7-methylguanosine cap of a subset of mRNAs. The polypeptide is Eukaryotic translation initiation factor 3 subunit D-1 (Drosophila pseudoobscura pseudoobscura (Fruit fly)).